Consider the following 205-residue polypeptide: Deoxyuridine 5'-triphosphate nucleotidohydrolase (205 aa).

Residue S54 is modified to Phosphoserine. Substrate contacts are provided by residues 126 to 128, 140 to 143, G151, and 199 to 200; these read RSG, GVID, and FG.

Belongs to the dUTPase family. In terms of assembly, homotrimer. Mg(2+) serves as cofactor. In terms of tissue distribution, expressed in all tissues examined. Higher levels in heart and kidney.

It localises to the cytoplasm. Its subcellular location is the nucleus. It carries out the reaction dUTP + H2O = dUMP + diphosphate + H(+). Its pathway is pyrimidine metabolism; dUMP biosynthesis; dUMP from dCTP (dUTP route): step 2/2. In terms of biological role, catalyzes the cleavage of 2'-deoxyuridine 5'-triphosphate (dUTP) into 2'-deoxyuridine 5'-monophosphate (dUMP) and inorganic pyrophosphate and through its action efficiently prevents uracil misincorporation into DNA and at the same time provides dUMP, the substrate for de novo thymidylate biosynthesis. Inhibits peroxisome proliferator-activated receptor (PPAR) activity by binding of its N-terminal to PPAR, preventing the latter's dimerization with retinoid X receptor. Essential for embryonic development. The protein is Deoxyuridine 5'-triphosphate nucleotidohydrolase (Dut) of Rattus norvegicus (Rat).